The primary structure comprises 228 residues: Ras-related protein Rab-32D (228 aa).

16–23 lines the GTP pocket; sequence GDVNVGKT. The Effector region motif lies at 38-46; sequence YKSTIGADF. Residues 64-68 and 128-131 each bind GTP; these read DTAGQ and NKSD. Positions 183 to 228 are disordered; that stretch reads SDNEQFNDSPDEETSSITLLGTSKKHDNTNPNKPSTSSPSSCFNCK. A compositionally biased stretch (acidic residues) spans 185 to 196; that stretch reads NEQFNDSPDEET. A compositionally biased stretch (low complexity) spans 211-228; it reads TNPNKPSTSSPSSCFNCK. Cys224 carries S-geranylgeranyl cysteine lipidation.

Belongs to the small GTPase superfamily. Rab family.

This is Ras-related protein Rab-32D (rab32D) from Dictyostelium discoideum (Social amoeba).